The chain runs to 384 residues: Urea transporter 1 (384 aa).

Phosphoserine is present on glutamate 39. 5 helical membrane passes run isoleucine 61–leucine 81, proline 85–leucine 105, alanine 111–phenylalanine 131, phenylalanine 138–alanine 158, and leucine 168–histidine 188. N-linked (GlcNAc...) asparagine glycosylation is present at asparagine 206. Helical transmembrane passes span leucine 250 to alanine 270, isoleucine 276 to phenylalanine 296, leucine 305 to methionine 325, and valine 327 to leucine 347.

The protein belongs to the urea transporter family. In terms of assembly, homotrimer; each subunit contains a pore through which urea permeates. Identified in a complex with STOM. N-glycosylated in red blood cells, as well as in most non-erythroid tissues, except in the gastrocnemius muscle and in the gastrointestinal tract, including liver, colon and stomach. As to expression, expressed in brain, kidney, heart, liver, lung, skeletal muscle, spleen, testis, ureter and urinary bladder (at protein level). Along the gastrointestinal tract, detected in colon, jejunum and stomach (at protein level). In the kidney, expressed in some microvessels of the inner and outer medulla, but not all (at protein level). Not detected in the cortex (at protein level). Detected in the urothelium all along the urinary tract, including the papilla surface, the ureter, the bladder and the urethra (at protein level). In the brain, expressed at the border of the corpus callosum and striatum in astrocytic cellular processes surrounding blood microvessels (at protein level). Detected in erythrocytes (at protein level).

It localises to the cell membrane. It is found in the basolateral cell membrane. It catalyses the reaction urea(in) = urea(out). In terms of biological role, mediates the transport of urea driven by a concentration gradient across the cell membranes of erythrocytes and the renal inner medullary collecting duct which is critical to the urinary concentrating mechanism. Facilitates water transport in erythrocytes. The chain is Urea transporter 1 (Slc14a1) from Mus musculus (Mouse).